A 145-amino-acid polypeptide reads, in one-letter code: Peptide methionine sulfoxide reductase MsrB (145 aa).

Residues Ser-4 to Tyr-127 form the MsrB domain. The Nucleophile role is filled by Cys-116.

Belongs to the MsrB Met sulfoxide reductase family.

The enzyme catalyses L-methionyl-[protein] + [thioredoxin]-disulfide + H2O = L-methionyl-(R)-S-oxide-[protein] + [thioredoxin]-dithiol. This Streptococcus pyogenes serotype M1 protein is Peptide methionine sulfoxide reductase MsrB.